We begin with the raw amino-acid sequence, 379 residues long: Inactive deoxyhypusine synthase (379 aa).

The disordered stretch occupies residues 1–48; the sequence is MLASVPAPRPAKKDSAASRRKSASKSTGAAVKDGSSARVSASGAAESP. Low complexity predominate over residues 36-47; it reads SARVSASGAAES. Residues 115-119, 141-143, E147, and D256 contribute to the NAD(+) site; these read SNMIS and SAG. 146 to 147 contributes to the spermidine binding site; that stretch reads EE. D261 serves as a coordination point for spermidine. Position 302 (G302) interacts with NAD(+). A spermidine-binding site is contributed by H307. 323–324 is an NAD(+) binding site; that stretch reads TG. Residues 329–331 and 338–344 each bind spermidine; these read GCV and DDVACGL. Residue 357 to 358 coordinates NAD(+); it reads DA.

The protein belongs to the deoxyhypusine synthase family.

The sequence is that of Inactive deoxyhypusine synthase from Leishmania donovani.